Here is a 445-residue protein sequence, read N- to C-terminus: MKHFEANFDGLVGPTHNYAGLSFGNVASLNNAAATSNPRAAAKQGLKKAKALADMGMVQGMLAPQERPDLHTLRRIGFSGTDAEILNKAAKEAPALLRACCSASSMWTANAATVSPSADTHDGKLHFTPANLVDKLHRSIEPETTGNILAATFNNSRHFAHHQHLPEHSSFGDEGAANHTRLCKDYGNAGVELFVYGQEATNPAAPKPSKFPARQTLEASQAIARLHQLDDENTVFISQNPDVIDQGVFHNDVIAVGNQNVLFYHEQAFLDTKRKLDEIKRKFGDSELHFIEVPTSRVAIQDAVKSYLFNTQIITLPSGEMAIIAPTNCQENEAVHAYLNEVVTLGSPIKQVNYFDVKQSMQNGGGPACLRLRVAMNDMELAAVNQHTLMNDALFTRLNAWVDKHYRDRLSVDDLADPQVLIESRTALDELTQIMKLGSVYQFQK.

Substrate is bound by residues 19–28, N110, and 137–138; these read AGLSFGNVAS and HR. E174 is a catalytic residue. R214 serves as a coordination point for substrate. The active site involves H250. Substrate is bound by residues D252 and N363. C369 functions as the Nucleophile in the catalytic mechanism.

This sequence belongs to the succinylarginine dihydrolase family. In terms of assembly, homodimer.

The enzyme catalyses N(2)-succinyl-L-arginine + 2 H2O + 2 H(+) = N(2)-succinyl-L-ornithine + 2 NH4(+) + CO2. Its pathway is amino-acid degradation; L-arginine degradation via AST pathway; L-glutamate and succinate from L-arginine: step 2/5. Catalyzes the hydrolysis of N(2)-succinylarginine into N(2)-succinylornithine, ammonia and CO(2). The chain is N-succinylarginine dihydrolase from Shewanella sediminis (strain HAW-EB3).